A 491-amino-acid polypeptide reads, in one-letter code: Protein nucleotidyltransferase YdiU (491 aa).

Residues glycine 88, glycine 90, arginine 91, lysine 111, aspartate 123, glycine 124, arginine 174, and arginine 181 each coordinate ATP. Catalysis depends on aspartate 250, which acts as the Proton acceptor. Mg(2+) is bound by residues asparagine 251 and aspartate 260. Aspartate 260 contacts ATP. Residues 466 to 484 (DDQPDRADYAEPPQPEERV) show a composition bias toward basic and acidic residues. The segment at 466–491 (DDQPDRADYAEPPQPEERVLQTFCGT) is disordered.

This sequence belongs to the SELO family. The cofactor is Mg(2+). Mn(2+) serves as cofactor.

It carries out the reaction L-seryl-[protein] + ATP = 3-O-(5'-adenylyl)-L-seryl-[protein] + diphosphate. It catalyses the reaction L-threonyl-[protein] + ATP = 3-O-(5'-adenylyl)-L-threonyl-[protein] + diphosphate. The enzyme catalyses L-tyrosyl-[protein] + ATP = O-(5'-adenylyl)-L-tyrosyl-[protein] + diphosphate. The catalysed reaction is L-histidyl-[protein] + UTP = N(tele)-(5'-uridylyl)-L-histidyl-[protein] + diphosphate. It carries out the reaction L-seryl-[protein] + UTP = O-(5'-uridylyl)-L-seryl-[protein] + diphosphate. It catalyses the reaction L-tyrosyl-[protein] + UTP = O-(5'-uridylyl)-L-tyrosyl-[protein] + diphosphate. Nucleotidyltransferase involved in the post-translational modification of proteins. It can catalyze the addition of adenosine monophosphate (AMP) or uridine monophosphate (UMP) to a protein, resulting in modifications known as AMPylation and UMPylation. The sequence is that of Protein nucleotidyltransferase YdiU from Bradyrhizobium sp. (strain ORS 278).